Reading from the N-terminus, the 459-residue chain is V-type ATP synthase beta chain (459 aa).

This sequence belongs to the ATPase alpha/beta chains family.

Produces ATP from ADP in the presence of a proton gradient across the membrane. The V-type beta chain is a regulatory subunit. The polypeptide is V-type ATP synthase beta chain (Clostridium botulinum (strain Alaska E43 / Type E3)).